The primary structure comprises 599 residues: Sulfite reductase [NADPH] flavoprotein alpha-component (599 aa).

In terms of domain architecture, Flavodoxin-like spans 64 to 202; the sequence is ITIISASQTG…AASEWRARVV (139 aa). FMN-binding positions include 70–75, 117–120, and 153–162; these read SQTGNA, STQG, and LGDSSYEFFC. The FAD-binding FR-type domain occupies 234 to 448; it reads DSPLVASLSV…IEHNDNFRLP (215 aa). FAD is bound by residues Thr322, Ala356, 386–389, 404–406, Tyr410, and 419–422; these read RLYS, TVG, and GGAS. NADP(+) is bound by residues 519-520, 525-529, and Asp561; these read SR and KVYVQ. Position 599 (Tyr599) interacts with FAD.

This sequence belongs to the NADPH-dependent sulphite reductase flavoprotein subunit CysJ family. The protein in the N-terminal section; belongs to the flavodoxin family. In the C-terminal section; belongs to the flavoprotein pyridine nucleotide cytochrome reductase family. Alpha(8)-beta(8). The alpha component is a flavoprotein, the beta component is a hemoprotein. The cofactor is FAD. FMN serves as cofactor.

The catalysed reaction is hydrogen sulfide + 3 NADP(+) + 3 H2O = sulfite + 3 NADPH + 4 H(+). The protein operates within sulfur metabolism; hydrogen sulfide biosynthesis; hydrogen sulfide from sulfite (NADPH route): step 1/1. Its function is as follows. Component of the sulfite reductase complex that catalyzes the 6-electron reduction of sulfite to sulfide. This is one of several activities required for the biosynthesis of L-cysteine from sulfate. The flavoprotein component catalyzes the electron flow from NADPH -&gt; FAD -&gt; FMN to the hemoprotein component. The sequence is that of Sulfite reductase [NADPH] flavoprotein alpha-component from Escherichia coli O9:H4 (strain HS).